We begin with the raw amino-acid sequence, 205 residues long: Small ribosomal subunit protein uS4 (205 aa).

The region spanning 94–154 (SRLDNSVYRA…TRKDGKIRKN (61 aa)) is the S4 RNA-binding domain.

It belongs to the universal ribosomal protein uS4 family. In terms of assembly, part of the 30S ribosomal subunit. Contacts protein S5. The interaction surface between S4 and S5 is involved in control of translational fidelity.

Its function is as follows. One of the primary rRNA binding proteins, it binds directly to 16S rRNA where it nucleates assembly of the body of the 30S subunit. In terms of biological role, with S5 and S12 plays an important role in translational accuracy. The polypeptide is Small ribosomal subunit protein uS4 (Mesomycoplasma hyopneumoniae (strain 232) (Mycoplasma hyopneumoniae)).